The following is a 545-amino-acid chain: MLSVRVAAALARALPRQSGLVSKKALGAAFVATRNIHASGVWPPEKSGTAEVSSILEERILGADTTADLEETGRVLSIGDGIARVYGLRNVQAEEMVEFSSGLKGMSLNLEPDNVGVVGLANDKLIKEGDIVKRTGAIVDVPVGDELLGRVVDALGNTIDGKGPIGSKTRRRVGLKAPGIIPRISVREPMQTGIKAVDSLVPIGRGQRELIIGDRQTGKTSIAIDTIINQKRFNDGTDEKKKLYCIYVAIGQKRLTDADAMKYTIVVSRTASDAAPLQYLAPYSGCSMGEYFRDNGTHALIIYDDLSKQAVAYRQMSLLLRRPPGREAYPGDVFYLHSRLLERAAKMNDHFGGGSLTALPVIETQAGDVSAYIPTNVISITDGQIFLETELFYKGIRPAINVGLSVSRVGSAAQTRAMKQVAGTMKLELAQYREVAAFAQFGSDLDAATQQLLNRGVRLTELLKQGQYVPMAIEEQVTVIYAGVRGHLDKMEPSKITKFESAFLAHVKSQHQELLATIRADGKISEQADAKLKEIVLNFLSTFEA.

Residues Gln-216, Gly-218, Lys-219, Thr-220, and Ser-221 each coordinate ATP. Thr-220 is a Mg(2+) binding site. Position 304 (Asp-304) interacts with Mg(2+). ATP-binding residues include Gln-465 and Gln-467.

Belongs to the ATPase alpha/beta chains family. Homotrimer. Component of the ATP synthase complex composed at least of ATP5F1A/subunit alpha, ATP5F1B/subunit beta, ATP5MC1/subunit c (homooctomer), MT-ATP6/subunit a, MT-ATP8/subunit 8, ATP5ME/subunit e, ATP5MF/subunit f, ATP5MG/subunit g, ATP5MK/subunit k, ATP5MJ/subunit j, ATP5F1C/subunit gamma, ATP5F1D/subunit delta, ATP5F1E/subunit epsilon, ATP5PF/subunit F6, ATP5PB/subunit b, ATP5PD/subunit d, ATP5PO/subunit OSCP. ATP synthase complex consists of a soluble F(1) head domain (subunits alpha(3) and beta(3)) - the catalytic core - and a membrane F(0) domain - the membrane proton channel (subunits c, a, 8, e, f, g, k and j). These two domains are linked by a central stalk (subunits gamma, delta, and epsilon) rotating inside the F1 region and a stationary peripheral stalk (subunits F6, b, d, and OSCP).

It is found in the mitochondrion inner membrane. Its function is as follows. Subunit alpha, of the mitochondrial membrane ATP synthase complex (F(1)F(0) ATP synthase or Complex V) that produces ATP from ADP in the presence of a proton gradient across the membrane which is generated by electron transport complexes of the respiratory chain. ATP synthase complex consist of a soluble F(1) head domain - the catalytic core - and a membrane F(1) domain - the membrane proton channel. These two domains are linked by a central stalk rotating inside the F(1) region and a stationary peripheral stalk. During catalysis, ATP synthesis in the catalytic domain of F(1) is coupled via a rotary mechanism of the central stalk subunits to proton translocation. In vivo, can only synthesize ATP although its ATP hydrolase activity can be activated artificially in vitro. With the catalytic subunit beta (ATP5F1B), forms the catalytic core in the F(1) domain. Subunit alpha does not bear the catalytic high-affinity ATP-binding sites. This is ATP synthase F(1) complex subunit alpha, mitochondrial from Xenopus laevis (African clawed frog).